The sequence spans 525 residues: Acyl-lipid (9-3)-desaturase (525 aa).

The Cytochrome b5 heme-binding domain maps to 102–176; sequence KSTHPLSEVA…LQDFYIGDVE (75 aa). Positions 137 and 159 each coordinate heme. The helical transmembrane segment at 216–236 threads the bilayer; that stretch reads VAIFAASIAIICWSKTISAVL. The Histidine box-1 motif lies at 254-258; the sequence is HDFLH. Residues 266–286 form a helical membrane-spanning segment; that stretch reads WLNEVVGYVIGNAVLGFSTGW. A Histidine box-2 motif is present at residues 291-295; sequence HNLHH. 3 helical membrane-spanning segments follow: residues 340–360, 378–398, and 401–421; these read QHLFFMGLLFFARGSWLFWSW, GTVLFHYFWFVGTACYLLPGW, and LVWMAVTELMSGMLLGFVFVL. Positions 462-466 match the Histidine box-3 motif; that stretch reads QIEHH.

It belongs to the fatty acid desaturase type 1 family.

The protein resides in the membrane. The enzyme catalyses (9Z,12Z,15Z)-octadecatrienoyl-containing glycerolipid + 2 Fe(II)-[cytochrome b5] + O2 + 2 H(+) = (6Z,9Z,12Z,15Z)-octadecatetraenoyl-containing glycerolipid + 2 Fe(III)-[cytochrome b5] + 2 H2O. It catalyses the reaction a (9Z,12Z)-octadecadienoyl-containing glycerolipid + 2 Fe(II)-[cytochrome b5] + O2 + 2 H(+) = (6Z,9Z,12Z)-octadecatrienoyl-containing glycerolipid + 2 Fe(III)-[cytochrome b5] + 2 H2O. Its pathway is lipid metabolism; polyunsaturated fatty acid biosynthesis. Fatty acid desaturase able to introduce a delta(6)-double bond into delta(9)-unsaturated fatty-acid substrates. Can use both linoleic acid (18:2(9Z,12Z)) and alpha-linolenic acid (18:3(9Z,12Z,15Z)) as substrates. Required for the biosynthesis of arachidonic acid (20:4(5z,8Z,11Z,14Z)). The sequence is that of Acyl-lipid (9-3)-desaturase from Physcomitrium patens (Spreading-leaved earth moss).